Reading from the N-terminus, the 303-residue chain is N-acetyl-D-glucosamine kinase (303 aa).

ATP-binding positions include 4–11 (GFDIGGTK) and 133–140 (GVGGGLVL). Positions 157, 177, 179, and 184 each coordinate Zn(2+).

Belongs to the ROK (NagC/XylR) family. NagK subfamily.

It carries out the reaction N-acetyl-D-glucosamine + ATP = N-acetyl-D-glucosamine 6-phosphate + ADP + H(+). Its pathway is cell wall biogenesis; peptidoglycan recycling. In terms of biological role, catalyzes the phosphorylation of N-acetyl-D-glucosamine (GlcNAc) derived from cell-wall degradation, yielding GlcNAc-6-P. The protein is N-acetyl-D-glucosamine kinase of Salmonella choleraesuis (strain SC-B67).